Reading from the N-terminus, the 252-residue chain is 3-dehydroquinate dehydratase (252 aa).

3-dehydroquinate contacts are provided by residues 46–48 (EWR) and R82. Residue H143 is the Proton donor/acceptor of the active site. The active-site Schiff-base intermediate with substrate is K170. 3-dehydroquinate is bound by residues R212, S231, and Q235.

The protein belongs to the type-I 3-dehydroquinase family. In terms of assembly, homodimer.

It carries out the reaction 3-dehydroquinate = 3-dehydroshikimate + H2O. Its pathway is metabolic intermediate biosynthesis; chorismate biosynthesis; chorismate from D-erythrose 4-phosphate and phosphoenolpyruvate: step 3/7. Functionally, involved in the third step of the chorismate pathway, which leads to the biosynthesis of aromatic amino acids. Catalyzes the cis-dehydration of 3-dehydroquinate (DHQ) and introduces the first double bond of the aromatic ring to yield 3-dehydroshikimate. The sequence is that of 3-dehydroquinate dehydratase from Listeria monocytogenes serotype 4b (strain F2365).